Consider the following 69-residue polypeptide: Putative membrane protein insertion efficiency factor (69 aa).

This sequence belongs to the UPF0161 family.

The protein resides in the cell inner membrane. Could be involved in insertion of integral membrane proteins into the membrane. This is Putative membrane protein insertion efficiency factor from Dechloromonas aromatica (strain RCB).